A 455-amino-acid polypeptide reads, in one-letter code: MNCEVKHALHCAVLVAWIVCFAYFCGVFTEPVEGSVPESPVASYGLIWTVCLYLLRFTALLVLPQCLCNLGGLMMFNAFREKVQLKAAPLLSPFVCFRVVTKGNFPLLVKENIDTNMKTCFEAGMENFIFEVVTDKAINLPPNPRVREVVVPTVYKTKSGAKFKARALQYCLEDDVNILQPTDWIVHLDEETLLTTNAICGILNFCEDGKHQFGQGVITYANGDIVNWLTTLSDSFRVADDMGKLRFQFKLFHKPLFGWKGSYVVTQVEAERDVSYDHGMEGSIAEDCFFSMVAMKHGYSFDFIEGEMHEKSPFTMWDFLQQRKRWLQGILLTVHSSKIAVVHKALLALSLYAWATMPLTSLQVFLCPLFPLPRCLPFDFLLSFVGALNLYMYIFGVVKSFSHKYRNSLLRLAMYLAGALMTIPFNILIENAAVLVGMFGRKDQFYIVNKDIQTV.

It belongs to the glycosyltransferase 2 family. As to expression, endothelial cells.

The protein resides in the cytoplasm. It participates in protein modification; protein glycosylation. Glycosyltransferase with a proposed role in glycosphingolipid biosynthesis. Involved in susceptibility to pore-forming crystal toxins in conjunction with bre-1, bre-2, bre-4 and bre-5. Involved in resistance to the nematotoxic C.cinerea galectin Cgl2. Has a role in determining brood size. This is Beta-1,4-mannosyltransferase bre-3 (bre-3) from Caenorhabditis elegans.